The following is a 137-amino-acid chain: Endoribonuclease YbeY (137 aa).

Zn(2+)-binding residues include His103, His107, and His113.

The protein belongs to the endoribonuclease YbeY family. It depends on Zn(2+) as a cofactor.

It localises to the cytoplasm. Single strand-specific metallo-endoribonuclease involved in late-stage 70S ribosome quality control and in maturation of the 3' terminus of the 16S rRNA. This chain is Endoribonuclease YbeY, found in Acholeplasma laidlawii (strain PG-8A).